Reading from the N-terminus, the 184-residue chain is Peptide deformylase (184 aa).

Fe cation contacts are provided by C111 and H154. E155 is an active-site residue. A Fe cation-binding site is contributed by H158.

It belongs to the polypeptide deformylase family. Fe(2+) serves as cofactor.

It catalyses the reaction N-terminal N-formyl-L-methionyl-[peptide] + H2O = N-terminal L-methionyl-[peptide] + formate. In terms of biological role, removes the formyl group from the N-terminal Met of newly synthesized proteins. Requires at least a dipeptide for an efficient rate of reaction. N-terminal L-methionine is a prerequisite for activity but the enzyme has broad specificity at other positions. This is Peptide deformylase from Pediococcus pentosaceus (strain ATCC 25745 / CCUG 21536 / LMG 10740 / 183-1w).